The chain runs to 89 residues: Alpha-ketoglutarate dehydrogenase subunit 4, mitochondrial (89 aa).

This sequence belongs to the alpha-ketoglutarate dehydrogenase component 4 family. As to quaternary structure, component of the 2-oxoglutarate dehydrogenase complex (OGDC), also called alpha-ketoglutarate dehydrogenase (KGDH) complex. The copmplex is composed of the catalytic subunits OGDH (2-oxoglutarate dehydrogenase kgd1; also called E1 subunit), DLST (dihydrolipoamide succinyltransferase kgd2; also called E2 subunit) and DLD (dihydrolipoamide dehydrogenase dld1; also called E3 subunit), and the assembly factor KGD4. Within OGDC, interacts (via N-terminus) with E3 subunit and (via C-terminus) with the complex core formed by E1 and E2 subunits.

Its subcellular location is the mitochondrion. In terms of biological role, molecular adapter that is necessary to a form a stable 2-oxoglutarate dehydrogenase enzyme complex (OGDC). Required for incorporation of the E3 subunit (dld1) into the E1-E2 core (kgd1-kgd2) of mitochondrial OGDC, and acting as a stability factor for the fully assembled complex. The sequence is that of Alpha-ketoglutarate dehydrogenase subunit 4, mitochondrial (kgd4) from Schizosaccharomyces pombe (strain 972 / ATCC 24843) (Fission yeast).